The following is a 160-amino-acid chain: Ribosomal RNA large subunit methyltransferase H (160 aa).

S-adenosyl-L-methionine-binding positions include Leu76, Gly108, and 127 to 132 (FGFMTW).

This sequence belongs to the RNA methyltransferase RlmH family. As to quaternary structure, homodimer.

The protein resides in the cytoplasm. The enzyme catalyses pseudouridine(1915) in 23S rRNA + S-adenosyl-L-methionine = N(3)-methylpseudouridine(1915) in 23S rRNA + S-adenosyl-L-homocysteine + H(+). Functionally, specifically methylates the pseudouridine at position 1915 (m3Psi1915) in 23S rRNA. The protein is Ribosomal RNA large subunit methyltransferase H of Bartonella henselae (strain ATCC 49882 / DSM 28221 / CCUG 30454 / Houston 1) (Rochalimaea henselae).